An 86-amino-acid chain; its full sequence is Omega-theraphotoxin-Hhn1c (86 aa).

An N-terminal signal peptide occupies residues 1 to 21; that stretch reads MKSIVFVALFGLALLAVVCSA. The propeptide occupies 22-50; sequence SEDAHKELLKEVVRAMVVDKTDAVQAEER. 3 disulfides stabilise this stretch: Cys52–Cys66, Cys59–Cys71, and Cys65–Cys78.

It belongs to the neurotoxin 10 (Hwtx-1) family. 17 (Hntx-9) subfamily. In terms of tissue distribution, expressed by the venom gland.

It is found in the secreted. Its function is as follows. Ion channel inhibitor. This is Omega-theraphotoxin-Hhn1c from Cyriopagopus hainanus (Chinese bird spider).